We begin with the raw amino-acid sequence, 275 residues long: Rhamnulose-1-phosphate aldolase (275 aa).

E117 is an active-site residue. Residues H141, H143, and H212 each contribute to the Zn(2+) site.

The protein belongs to the aldolase class II family. RhaD subfamily. Homotetramer. It depends on Zn(2+) as a cofactor.

The protein localises to the cytoplasm. The enzyme catalyses L-rhamnulose 1-phosphate = (S)-lactaldehyde + dihydroxyacetone phosphate. It functions in the pathway carbohydrate degradation; L-rhamnose degradation; glycerone phosphate from L-rhamnose: step 3/3. Catalyzes the reversible cleavage of L-rhamnulose-1-phosphate to dihydroxyacetone phosphate (DHAP) and L-lactaldehyde. The protein is Rhamnulose-1-phosphate aldolase of Salmonella choleraesuis (strain SC-B67).